The primary structure comprises 143 residues: Periplasmic nitrate reductase, electron transfer subunit (143 aa).

A signal peptide spans 1–22 (MKKILTLAAIVLAIGGCSGQQA). The heme c site is built by His72, Cys85, Cys88, His89, His106, Cys121, Cys124, and His125.

Belongs to the NapB family. As to quaternary structure, component of the periplasmic nitrate reductase NapAB complex composed of NapA and NapB. Binds 2 heme C groups per subunit.

It is found in the periplasm. Its function is as follows. Electron transfer subunit of the periplasmic nitrate reductase complex NapAB. Receives electrons from the membrane-anchored tetraheme c-type CymA protein and transfers these to NapA subunit, thus allowing electron flow between membrane and periplasm. Not essential for nitrate reduction but confers advantage to the organism when grown on nitrate and thereby a fitness gain in utilizing nitrate. This chain is Periplasmic nitrate reductase, electron transfer subunit, found in Shewanella oneidensis (strain ATCC 700550 / JCM 31522 / CIP 106686 / LMG 19005 / NCIMB 14063 / MR-1).